A 267-amino-acid chain; its full sequence is Outer membrane protein assembly factor BamD (267 aa).

A signal peptide spans 1 to 16; sequence MKKILLTVSLGLALSA. Cys-17 carries the N-palmitoyl cysteine lipid modification. Residue Cys-17 is the site of S-diacylglycerol cysteine attachment.

It belongs to the BamD family. Part of the Bam complex.

Its subcellular location is the cell outer membrane. Its function is as follows. Part of the outer membrane protein assembly complex, which is involved in assembly and insertion of beta-barrel proteins into the outer membrane. Required for efficient transformation of Neisseria meningitidis by species-related DNA. This is Outer membrane protein assembly factor BamD from Neisseria meningitidis serogroup A / serotype 4A (strain DSM 15465 / Z2491).